We begin with the raw amino-acid sequence, 1335 residues long: Probable serine/threonine-protein kinase ndrC (1335 aa).

Disordered regions lie at residues 1 to 70 (MSRK…KKGS), 85 to 158 (VDTH…LIPS), 276 to 447 (LPPP…SPLN), and 462 to 603 (TTTT…NNNK). Polar residues predominate over residues 8-17 (NRSSSSNSIE). A compositionally biased stretch (low complexity) spans 27 to 41 (SNISNSSNINCNNSS). Residues 55 to 70 (RSKHSSPIHSLKKKGS) are compositionally biased toward basic residues. Over residues 89 to 117 (SSSNSNNNSSSNNNNNNNNHNINSSSESS) the composition is skewed to low complexity. Residues 118–132 (TPTTPRSSFTPQVTM) are compositionally biased toward polar residues. The span at 133–153 (NSNQSSGNNSPQLSSRSSSQS) shows a compositional bias: low complexity. A compositionally biased stretch (pro residues) spans 276 to 288 (LPPPSQQQLPPPQ). Low complexity-rich tracts occupy residues 289–331 (SHQQ…TPQS), 345–368 (NQQQIQSSQSTTPTNSSQKSSPNK), 382–396 (SPSPSSPSSPSSPSS), 412–424 (PTPLIITPSSPSS), 437–447 (PSSFSGGSPLN), and 462–484 (TTTTTTTTTTSSSSSLSVTTTIS). Residues 485-497 (NPNYTQNLPTTPL) are compositionally biased toward polar residues. A compositionally biased stretch (low complexity) spans 498 to 507 (SNSSSNNNNN). A compositionally biased stretch (polar residues) spans 508–528 (GSFITLQDTTNNKSIINNNRE). Positions 540–566 (SSGSSNTTSSTTNTTTPSSSSLTTSSG) are enriched in low complexity. The span at 567–581 (KESRDRDSKDKEKDL) shows a compositional bias: basic and acidic residues. Positions 586–602 (NNNNNNNNNNNNNNNNN) are enriched in low complexity. A coiled-coil region spans residues 586 to 613 (NNNNNNNNNNNNNNNNNKVEKEKENYCK). The Protein kinase domain occupies 718-1019 (FKILTQIGKG…KQDFKNHPFF (302 aa)). ATP-binding positions include 724–732 (IGKGGFGQV) and Lys747. The Proton acceptor role is filled by Asp840. Residues 1020–1106 (KNHNWDEIVN…RKSSALSLSM (87 aa)) form the AGC-kinase C-terminal domain. Residues 1239 to 1284 (SQSQPSLANQLQSSSSSPSPSLQSQSQSPSLQSSSKSTPNLSSSLL) show a composition bias toward low complexity. The disordered stretch occupies residues 1239-1313 (SQSQPSLANQ…IKKENESEEI (75 aa)). The segment covering 1287–1313 (PVKEELEYKNQTENEVEIKKENESEEI) has biased composition (basic and acidic residues). The stretch at 1289–1325 (KEELEYKNQTENEVEIKKENESEEIQSLRDQLKEIII) forms a coiled coil.

The protein belongs to the protein kinase superfamily. AGC Ser/Thr protein kinase family.

The enzyme catalyses L-seryl-[protein] + ATP = O-phospho-L-seryl-[protein] + ADP + H(+). It catalyses the reaction L-threonyl-[protein] + ATP = O-phospho-L-threonyl-[protein] + ADP + H(+). This is Probable serine/threonine-protein kinase ndrC (ndrC) from Dictyostelium discoideum (Social amoeba).